The following is a 156-amino-acid chain: Endoribonuclease YbeY (156 aa).

Residues His114, His118, and His124 each contribute to the Zn(2+) site.

Belongs to the endoribonuclease YbeY family. Requires Zn(2+) as cofactor.

The protein resides in the cytoplasm. Single strand-specific metallo-endoribonuclease involved in late-stage 70S ribosome quality control and in maturation of the 3' terminus of the 16S rRNA. This is Endoribonuclease YbeY from Sodalis glossinidius (strain morsitans).